The primary structure comprises 536 residues: GMP synthase [glutamine-hydrolyzing] (536 aa).

One can recognise a Glutamine amidotransferase type-1 domain in the interval 19-212; that stretch reads RILILDFGSQ…VHEICDCAGS (194 aa). Catalysis depends on C96, which acts as the Nucleophile. Residues H186 and E188 contribute to the active site. In terms of domain architecture, GMPS ATP-PPase spans 213–411; that stretch reads WTPDNIIDMR…LGLPAKMINR (199 aa). 240-246 is an ATP binding site; the sequence is SGGVDSS.

Homodimer.

The catalysed reaction is XMP + L-glutamine + ATP + H2O = GMP + L-glutamate + AMP + diphosphate + 2 H(+). The protein operates within purine metabolism; GMP biosynthesis; GMP from XMP (L-Gln route): step 1/1. Its function is as follows. Catalyzes the synthesis of GMP from XMP. The sequence is that of GMP synthase [glutamine-hydrolyzing] from Psychrobacter arcticus (strain DSM 17307 / VKM B-2377 / 273-4).